Consider the following 44-residue polypeptide: Capsid protein G8P (44 aa).

At serine 1 the chain carries N-acetylserine; by host. Residues 1–19 are Periplasmic-facing; that stretch reads SGVGDGVDVVSAIEGAAGP. A helical membrane pass occupies residues 20 to 37; sequence IAAIGGAVLTVMVGIKVY. The Cytoplasmic segment spans residues 38-44; that stretch reads KWVRRAM.

The protein belongs to the inovirus capsid protein family. Homomultimerizes. There are several thousands of this protein in the phage capsid.

The protein localises to the virion. The protein resides in the host membrane. Its function is as follows. Self assembles to form a helical capsid wrapping up the viral genomic DNA. The capsid displays a filamentous structure with a length of 760-1950 nm and a width of 6-8 nm. The virion assembly and budding take place at the host inner membrane. This Xanthomonas campestris pv. oryzae (Bacteriophage Xf) protein is Capsid protein G8P (VIII).